The chain runs to 224 residues: Glutathione S-transferase U1 (224 aa).

Positions 6–85 (ESVKLLGFWA…YIDQTWKNSP (80 aa)) constitute a GST N-terminal domain. Glutathione-binding positions include 16-17 (SP), 42-43 (NK), 56-57 (KV), and 69-70 (ES). The region spanning 90 to 217 (DPYEKAMARF…EKQIERMTKI (128 aa)) is the GST C-terminal domain. Thr-151 is modified (phosphothreonine).

This sequence belongs to the GST superfamily. Tau family.

It is found in the cytoplasm. The protein localises to the cytosol. The catalysed reaction is RX + glutathione = an S-substituted glutathione + a halide anion + H(+). Functionally, may be involved in the conjugation of reduced glutathione to a wide number of exogenous and endogenous hydrophobic electrophiles and have a detoxification role against certain herbicides. The sequence is that of Glutathione S-transferase U1 (GSTU1) from Arabidopsis thaliana (Mouse-ear cress).